We begin with the raw amino-acid sequence, 291 residues long: Elongation factor Ts (291 aa).

An involved in Mg(2+) ion dislocation from EF-Tu region spans residues 79 to 82; the sequence is TDFV.

Belongs to the EF-Ts family.

It localises to the cytoplasm. Its function is as follows. Associates with the EF-Tu.GDP complex and induces the exchange of GDP to GTP. It remains bound to the aminoacyl-tRNA.EF-Tu.GTP complex up to the GTP hydrolysis stage on the ribosome. The protein is Elongation factor Ts of Ruegeria pomeroyi (strain ATCC 700808 / DSM 15171 / DSS-3) (Silicibacter pomeroyi).